Here is a 213-residue protein sequence, read N- to C-terminus: THAP domain-containing protein 1 (213 aa).

The segment at 1-81 (MVQSCSAYGC…LKENAVPTIF (81 aa)) adopts a THAP-type zinc-finger fold. The short motif at 134 to 137 (DHNY) is the HCFC1-binding motif (HBM) element. The tract at residues 139-185 (VEDTMHQRKRIHQLEQQVEKLRKKLKTAQQRCRRQERQLEKLKEVVH) is involved in homodimer formation. A coiled-coil region spans residues 139 to 190 (VEDTMHQRKRIHQLEQQVEKLRKKLKTAQQRCRRQERQLEKLKEVVHFQKEK).

This sequence belongs to the THAP1 family. Homodimer. Interacts with PAWR. Component of a THAP1/THAP3-HCFC1-OGT complex that contains, either THAP1 or THAP3, HCFC1 and OGT. Interacts with OGT. Interacts (via the HBM) with HCFC1 (via the Kelch-repeat domain); the interaction recruits HCFC1 to the RRM1 promoter. As to expression, highly expressed in heart, skeletal muscle, kidney and liver. Weaker expression in brain and placenta.

It is found in the nucleus. The protein localises to the nucleoplasm. The protein resides in the PML body. Its function is as follows. DNA-binding transcription regulator that regulates endothelial cell proliferation and G1/S cell-cycle progression. Specifically binds the 5'-[AT]NTNN[GT]GGCA[AGT]-3' core DNA sequence and acts by modulating expression of pRB-E2F cell-cycle target genes, including RRM1. Component of a THAP1/THAP3-HCFC1-OGT complex that is required for the regulation of the transcriptional activity of RRM1. May also have pro-apoptotic activity by potentiating both serum-withdrawal and TNF-induced apoptosis. This chain is THAP domain-containing protein 1 (THAP1), found in Homo sapiens (Human).